Reading from the N-terminus, the 154-residue chain is Small ribosomal subunit protein bS6 (154 aa).

The segment at 107–154 (KSDDRERGFRGPKPPGRFESGRKRGYDDREEFRARAGGDDDDRGLDQE) is disordered. The segment covering 125–154 (ESGRKRGYDDREEFRARAGGDDDDRGLDQE) has biased composition (basic and acidic residues).

It belongs to the bacterial ribosomal protein bS6 family.

In terms of biological role, binds together with bS18 to 16S ribosomal RNA. The chain is Small ribosomal subunit protein bS6 from Granulibacter bethesdensis (strain ATCC BAA-1260 / CGDNIH1).